Here is a 199-residue protein sequence, read N- to C-terminus: GTP cyclohydrolase-2 (199 aa).

49-53 (RIHSE) is a GTP binding site. Residues cysteine 54, cysteine 65, and cysteine 67 each coordinate Zn(2+). GTP is bound by residues glutamine 70, 92-94 (EGR), and threonine 114. Aspartate 126 acts as the Proton acceptor in catalysis. The active-site Nucleophile is the arginine 128. GTP-binding residues include threonine 149 and lysine 154. Positions 172-199 (ETGRNPHNSHYLETKRGKLGHLLEGDSE) are disordered.

Belongs to the GTP cyclohydrolase II family. It depends on Zn(2+) as a cofactor.

The catalysed reaction is GTP + 4 H2O = 2,5-diamino-6-hydroxy-4-(5-phosphoribosylamino)-pyrimidine + formate + 2 phosphate + 3 H(+). It participates in cofactor biosynthesis; riboflavin biosynthesis; 5-amino-6-(D-ribitylamino)uracil from GTP: step 1/4. Functionally, catalyzes the conversion of GTP to 2,5-diamino-6-ribosylamino-4(3H)-pyrimidinone 5'-phosphate (DARP), formate and pyrophosphate. This chain is GTP cyclohydrolase-2, found in Teredinibacter turnerae (strain ATCC 39867 / T7901).